Consider the following 297-residue polypeptide: uncharacterized protein (297 aa).

5 consecutive transmembrane segments (helical) span residues 114 to 136 (YNRWLVVFMIGLSCAAFAHLSSG), 150 to 170 (LLYDMLFAAIPAVGFALVFNV), 197 to 217 (MPIVFATFFATCVIGFLGVHL), 227 to 247 (AFTVAAIIPMIPGVHAYKAMI), and 269 to 289 (FINTSFILGAIVFGLALPGLL).

Belongs to the ThrE exporter (TC 2.A.79) family.

The protein resides in the cell inner membrane. This is an uncharacterized protein from Haemophilus influenzae (strain ATCC 51907 / DSM 11121 / KW20 / Rd).